Consider the following 296-residue polypeptide: Xyloglucan endotransglucosylase/hydrolase 1 (296 aa).

Residues 1–23 (MGSSSSMWTVCVILASLASAALC) form the signal peptide. In terms of domain architecture, GH16 spans 24–222 (ANPRRPVDVQ…WSKAPFIAAY (199 aa)). The active-site Nucleophile is the glutamate 108. Glutamate 112 (proton donor) is an active-site residue. Residue glutamate 112 coordinates xyloglucan. An N-linked (GlcNAc...) asparagine glycan is attached at asparagine 116. Xyloglucan is bound by residues 125–127 (QTN), 135–137 (DRE), 201–202 (DW), and glycine 206. Intrachain disulfides connect cysteine 230–cysteine 239 and cysteine 276–cysteine 290. Residue arginine 281 participates in xyloglucan binding.

The protein belongs to the glycosyl hydrolase 16 family. XTH group 1 subfamily. Post-translationally, contains at least one intrachain disulfide bond essential for its enzymatic activity. In terms of processing, N-glycosylated; not essential for its enzymatic activity.

It localises to the secreted. The protein resides in the cell wall. Its subcellular location is the extracellular space. The protein localises to the apoplast. It catalyses the reaction breaks a beta-(1-&gt;4) bond in the backbone of a xyloglucan and transfers the xyloglucanyl segment on to O-4 of the non-reducing terminal glucose residue of an acceptor, which can be a xyloglucan or an oligosaccharide of xyloglucan.. In terms of biological role, catalyzes xyloglucan endohydrolysis (XEH) and/or endotransglycosylation (XET). Cleaves and religates xyloglucan polymers, an essential constituent of the primary cell wall, and thereby participates in cell wall construction of growing tissues. The protein is Xyloglucan endotransglucosylase/hydrolase 1 of Glycine max (Soybean).